A 146-amino-acid polypeptide reads, in one-letter code: Aminoglycoside N(6')-acetyltransferase type 1 (146 aa).

The N-acetyltransferase domain occupies 1 to 146 (MNIMPVSESL…RVVYFKKHIG (146 aa)). Positions 22, 25, 66, and 79 each coordinate substrate. 81 to 83 (IYV) contributes to the acetyl-CoA binding site. Asp-115 is a substrate binding site. Asn-120 serves as a coordination point for acetyl-CoA. Glu-136 is a substrate binding site.

As to quaternary structure, homodimer.

It catalyses the reaction kanamycin B + acetyl-CoA = N(6')-acetylkanamycin B + CoA + H(+). Functionally, catalyzes the transfer of an acetyl group from acetyl-CoA to the 6'-amino group of aminoglycoside molecules conferring resistance to antibiotics containing the purpurosamine ring including amikacin, kanamycin, tobramycin and netilmicin. The sequence is that of Aminoglycoside N(6')-acetyltransferase type 1 from Acinetobacter genomosp. 13.